A 65-amino-acid polypeptide reads, in one-letter code: Large ribosomal subunit protein uL29 (65 aa).

Belongs to the universal ribosomal protein uL29 family.

This chain is Large ribosomal subunit protein uL29, found in Lactobacillus helveticus (strain DPC 4571).